A 369-amino-acid polypeptide reads, in one-letter code: Flagellar P-ring protein (369 aa).

The signal sequence occupies residues 1-22 (MIKLKQLIAATLLLSTAFGVHA).

The protein belongs to the FlgI family. In terms of assembly, the basal body constitutes a major portion of the flagellar organelle and consists of four rings (L,P,S, and M) mounted on a central rod.

Its subcellular location is the periplasm. The protein resides in the bacterial flagellum basal body. Functionally, assembles around the rod to form the L-ring and probably protects the motor/basal body from shearing forces during rotation. This chain is Flagellar P-ring protein, found in Pseudomonas savastanoi pv. phaseolicola (strain 1448A / Race 6) (Pseudomonas syringae pv. phaseolicola (strain 1448A / Race 6)).